The sequence spans 965 residues: Serine/threonine-protein kinase tousled-like 1 (965 aa).

Disordered regions lie at residues 1–22, 35–72, 95–120, 172–292, 320–402, and 538–576; these read MSML…GGER, PQNK…ATGD, QNSS…TRSS, NHQQ…KQER, QNQG…QSGR, and RKPL…DDAI. Over residues 10–21 the composition is skewed to gly residues; it reads VAGGGSSSGGGE. Positions 42 to 52 are enriched in polar residues; it reads TVQSSGSSSNH. A compositionally biased stretch (low complexity) spans 172–231; the sequence is NHQQQMQQMHYHQQQQQYQQQQAQHHQMYAPQIQQQQQQPQQQSQQQSAQQPQQSSAALQ. Composition is skewed to polar residues over residues 233 to 244 and 320 to 341; these read VNESSNLSSAGS and QNQG…SYDS. Over residues 342 to 355 the composition is skewed to low complexity; the sequence is QQQQPQMNQHEMQN. Over residues 365–381 the composition is skewed to polar residues; it reads LGVNNRGTPTPTQQQHY. A compositionally biased stretch (low complexity) spans 382 to 401; the sequence is SSDSNSNSNQSPPGQGNQSG. Positions 552 to 572 are enriched in polar residues; that stretch reads AVNSQNDSNGMQPSTSSNTNG. Phosphoserine is present on Ser634. One can recognise a Protein kinase domain in the interval 651 to 928; the sequence is YLMLNLLGKG…VFELAKHELF (278 aa). Residues 657–665 and Lys680 contribute to the ATP site; that span reads LGKGGFSEV. Asp781 acts as the Proton acceptor in catalysis.

Belongs to the protein kinase superfamily. Ser/Thr protein kinase family. Interacts with air-2. Autophosphorylates in vitro. Phosphorylation on Ser-634 by air-2 enhances catalytic activity.

The protein localises to the nucleus. It carries out the reaction L-seryl-[protein] + ATP = O-phospho-L-seryl-[protein] + ADP + H(+). The catalysed reaction is L-threonyl-[protein] + ATP = O-phospho-L-threonyl-[protein] + ADP + H(+). In terms of biological role, essential for appropriate transcription during embryonic development. May act during transcription elongation to activate the RNA polymerase II large subunit (ama-1) by phosphorylating the Ser-2 residues of the C-terminal domain 7-residue repeats. Does not phosphorylate histone H3. The polypeptide is Serine/threonine-protein kinase tousled-like 1 (tlk-1) (Caenorhabditis elegans).